Reading from the N-terminus, the 83-residue chain is Defensin-2 (83 aa).

The first 33 residues, 1–33 (MAGKGVGTPLSALFLLVLLVVTIGMMEVQVAEG), serve as a signal peptide directing secretion. 4 disulfide bridges follow: cysteine 36–cysteine 82, cysteine 47–cysteine 67, cysteine 53–cysteine 76, and cysteine 57–cysteine 78.

Belongs to the DEFL family.

The protein resides in the secreted. Plant defense peptide. Has antifungal activity. This Pinus sylvestris (Scotch pine) protein is Defensin-2.